We begin with the raw amino-acid sequence, 377 residues long: UPF0425 pyridoxal phosphate-dependent protein MTH_1914 (377 aa).

The residue at position 207 (K207) is an N6-(pyridoxal phosphate)lysine.

The protein belongs to the UPF0425 family. It depends on pyridoxal 5'-phosphate as a cofactor.

The protein is UPF0425 pyridoxal phosphate-dependent protein MTH_1914 of Methanothermobacter thermautotrophicus (strain ATCC 29096 / DSM 1053 / JCM 10044 / NBRC 100330 / Delta H) (Methanobacterium thermoautotrophicum).